The following is a 290-amino-acid chain: 33 kDa chaperonin (290 aa).

2 disulfide bridges follow: Cys235–Cys237 and Cys268–Cys271.

Belongs to the HSP33 family. In terms of processing, under oxidizing conditions two disulfide bonds are formed involving the reactive cysteines. Under reducing conditions zinc is bound to the reactive cysteines and the protein is inactive.

It is found in the cytoplasm. Its function is as follows. Redox regulated molecular chaperone. Protects both thermally unfolding and oxidatively damaged proteins from irreversible aggregation. Plays an important role in the bacterial defense system toward oxidative stress. The chain is 33 kDa chaperonin from Streptococcus pyogenes serotype M1.